A 252-amino-acid chain; its full sequence is 3-dehydroquinate dehydratase (252 aa).

3-dehydroquinate-binding positions include 46-48 and Arg-82; that span reads EWR. Residue His-143 is the Proton donor/acceptor of the active site. Lys-170 serves as the catalytic Schiff-base intermediate with substrate. The 3-dehydroquinate site is built by Arg-212, Ser-231, and Gln-235.

This sequence belongs to the type-I 3-dehydroquinase family. As to quaternary structure, homodimer.

It carries out the reaction 3-dehydroquinate = 3-dehydroshikimate + H2O. The protein operates within metabolic intermediate biosynthesis; chorismate biosynthesis; chorismate from D-erythrose 4-phosphate and phosphoenolpyruvate: step 3/7. Its function is as follows. Involved in the third step of the chorismate pathway, which leads to the biosynthesis of aromatic amino acids. Catalyzes the cis-dehydration of 3-dehydroquinate (DHQ) and introduces the first double bond of the aromatic ring to yield 3-dehydroshikimate. This is 3-dehydroquinate dehydratase from Listeria monocytogenes serotype 4b (strain F2365).